A 226-amino-acid chain; its full sequence is 7-carboxy-7-deazaguanine synthase (226 aa).

Substrate is bound by residues 10 to 12 (LQG) and arginine 25. The Radical SAM core domain maps to 16 to 221 (YTGIPCIFVR…LQTHKFIWTP (206 aa)). Cysteine 29, cysteine 33, and cysteine 36 together coordinate [4Fe-4S] cluster. Serine 38 is a binding site for Mg(2+). Threonine 69 contacts substrate. Residue glycine 71 participates in S-adenosyl-L-methionine binding.

It belongs to the radical SAM superfamily. 7-carboxy-7-deazaguanine synthase family. Homodimer. [4Fe-4S] cluster serves as cofactor. It depends on S-adenosyl-L-methionine as a cofactor. Requires Mg(2+) as cofactor.

It carries out the reaction 6-carboxy-5,6,7,8-tetrahydropterin + H(+) = 7-carboxy-7-deazaguanine + NH4(+). It functions in the pathway purine metabolism; 7-cyano-7-deazaguanine biosynthesis. Catalyzes the complex heterocyclic radical-mediated conversion of 6-carboxy-5,6,7,8-tetrahydropterin (CPH4) to 7-carboxy-7-deazaguanine (CDG), a step common to the biosynthetic pathways of all 7-deazapurine-containing compounds. In Koribacter versatilis (strain Ellin345), this protein is 7-carboxy-7-deazaguanine synthase.